The chain runs to 906 residues: UPF0182 protein CA_C0010 (906 aa).

Transmembrane regions (helical) follow at residues 7-29 (IVTIILFLLVIVGSFGKVTDFII), 47-69 (LAAILKLMIPIFIIIYTGLWFYY), 96-118 (VAIVIDVIASFFVAYFTSSVYWY), 153-175 (LYGVMLLFLIFMAVLTVILYIVL), 208-230 (FAIISGLIMFLVAVGYAIRSFNL), 250-272 (LVFYVIIIAAAIVSSVVIFTSII), and 279-301 (IFVSIVAILILIIGQSITAEIVQ). Over residues 842 to 862 (NSSNNQSETRTETGGTSTDSS) the composition is skewed to low complexity. A disordered region spans residues 842 to 875 (NSSNNQSETRTETGGTSTDSSNNKDKLKQAQDLY).

Belongs to the UPF0182 family.

It localises to the cell membrane. The polypeptide is UPF0182 protein CA_C0010 (Clostridium acetobutylicum (strain ATCC 824 / DSM 792 / JCM 1419 / IAM 19013 / LMG 5710 / NBRC 13948 / NRRL B-527 / VKM B-1787 / 2291 / W)).